Here is a 178-residue protein sequence, read N- to C-terminus: Large ribosomal subunit protein bL25 (178 aa).

This sequence belongs to the bacterial ribosomal protein bL25 family. CTC subfamily. As to quaternary structure, part of the 50S ribosomal subunit; part of the 5S rRNA/L5/L18/L25 subcomplex. Contacts the 5S rRNA. Binds to the 5S rRNA independently of L5 and L18.

Its function is as follows. This is one of the proteins that binds to the 5S RNA in the ribosome where it forms part of the central protuberance. The sequence is that of Large ribosomal subunit protein bL25 from Helicobacter pylori (strain J99 / ATCC 700824) (Campylobacter pylori J99).